The primary structure comprises 432 residues: Glutamate-1-semialdehyde 2,1-aminomutase 1 (432 aa).

At Lys268 the chain carries N6-(pyridoxal phosphate)lysine.

It belongs to the class-III pyridoxal-phosphate-dependent aminotransferase family. HemL subfamily. As to quaternary structure, homodimer. It depends on pyridoxal 5'-phosphate as a cofactor.

The protein resides in the cytoplasm. The catalysed reaction is (S)-4-amino-5-oxopentanoate = 5-aminolevulinate. Its pathway is porphyrin-containing compound metabolism; protoporphyrin-IX biosynthesis; 5-aminolevulinate from L-glutamyl-tRNA(Glu): step 2/2. This is Glutamate-1-semialdehyde 2,1-aminomutase 1 from Bacillus cereus (strain B4264).